The following is a 387-amino-acid chain: Cysteine desulfurase IscS (387 aa).

Residues 73 to 74, Asn-155, Gln-183, and 203 to 205 each bind pyridoxal 5'-phosphate; these read AT and SAH. At Lys-206 the chain carries N6-(pyridoxal phosphate)lysine. Thr-241 is a pyridoxal 5'-phosphate binding site. The Cysteine persulfide intermediate role is filled by Cys-328. Residue Cys-328 coordinates [2Fe-2S] cluster.

Belongs to the class-V pyridoxal-phosphate-dependent aminotransferase family. NifS/IscS subfamily. Homodimer. Forms a heterotetramer with IscU, interacts with other sulfur acceptors. It depends on pyridoxal 5'-phosphate as a cofactor.

Its subcellular location is the cytoplasm. It carries out the reaction (sulfur carrier)-H + L-cysteine = (sulfur carrier)-SH + L-alanine. It participates in cofactor biosynthesis; iron-sulfur cluster biosynthesis. Functionally, master enzyme that delivers sulfur to a number of partners involved in Fe-S cluster assembly, tRNA modification or cofactor biosynthesis. Catalyzes the removal of elemental sulfur atoms from cysteine to produce alanine. Functions as a sulfur delivery protein for Fe-S cluster synthesis onto IscU, an Fe-S scaffold assembly protein, as well as other S acceptor proteins. The chain is Cysteine desulfurase IscS from Helicobacter pylori (strain Shi470).